The primary structure comprises 90 residues: Cytochrome c7 (90 aa).

An N-terminal signal peptide occupies residues 1–20 (MKRIIASLALSVFCAGLAFA). Positions 37, 40, 47, 50, 51, 67, 70, 73, 74, 84, 87, and 88 each coordinate heme.

Binds 3 heme groups per subunit.

In terms of biological role, may be involved in anaerobic iron respiration. In Geobacter metallireducens (strain ATCC 53774 / DSM 7210 / GS-15), this protein is Cytochrome c7.